We begin with the raw amino-acid sequence, 104 residues long: L-rhamnose mutarotase (104 aa).

Tyr18 provides a ligand contact to substrate. His22 functions as the Proton donor in the catalytic mechanism. Substrate-binding positions include Tyr41 and Trp76 to Trp77.

It belongs to the rhamnose mutarotase family. As to quaternary structure, homodimer.

Its subcellular location is the cytoplasm. The enzyme catalyses alpha-L-rhamnose = beta-L-rhamnose. The protein operates within carbohydrate metabolism; L-rhamnose metabolism. In terms of biological role, involved in the anomeric conversion of L-rhamnose. The chain is L-rhamnose mutarotase from Bacillus subtilis (strain 168).